We begin with the raw amino-acid sequence, 237 residues long: RNA chaperone ProQ (237 aa).

A disordered region spans residues 106–188 (AKARVQAQRA…QPRPVPVTDI (83 aa)). The segment covering 146–158 (PRREAGAAPENRK) has biased composition (basic and acidic residues).

Belongs to the ProQ family.

It is found in the cytoplasm. In terms of biological role, RNA chaperone with significant RNA binding, RNA strand exchange and RNA duplexing activities. May regulate ProP activity through an RNA-based, post-transcriptional mechanism. The sequence is that of RNA chaperone ProQ from Yersinia pseudotuberculosis serotype O:1b (strain IP 31758).